Consider the following 488-residue polypeptide: Glutamyl-tRNA(Gln) amidotransferase subunit A (488 aa).

Catalysis depends on charge relay system residues lysine 77 and serine 152. The Acyl-ester intermediate role is filled by serine 176.

Belongs to the amidase family. GatA subfamily. As to quaternary structure, heterotrimer of A, B and C subunits.

It catalyses the reaction L-glutamyl-tRNA(Gln) + L-glutamine + ATP + H2O = L-glutaminyl-tRNA(Gln) + L-glutamate + ADP + phosphate + H(+). In terms of biological role, allows the formation of correctly charged Gln-tRNA(Gln) through the transamidation of misacylated Glu-tRNA(Gln) in organisms which lack glutaminyl-tRNA synthetase. The reaction takes place in the presence of glutamine and ATP through an activated gamma-phospho-Glu-tRNA(Gln). The protein is Glutamyl-tRNA(Gln) amidotransferase subunit A of Streptococcus pyogenes serotype M3 (strain ATCC BAA-595 / MGAS315).